The sequence spans 647 residues: CRE-binding bZIP protein SKO1 (647 aa).

Disordered stretches follow at residues 1–119 (MSSE…GSKR), 135–204 (STTN…QMPG), 305–331 (TPTT…TSTK), and 353–429 (KENE…EEQE). Positions 51–85 (RNNSTSTITQHSQRSTHSLNSIPEENGNSTVTDNS) are enriched in polar residues. Position 94 is a phosphoserine (serine 94). Position 113 is a phosphothreonine (threonine 113). Composition is skewed to low complexity over residues 138-194 (NPSQ…SGNG) and 305-329 (TPTT…PNTS). Polar residues-rich tracts occupy residues 357 to 368 (NLTTQIENNDQF) and 396 to 405 (RKNSAVTTAP). Serine 399 is modified (phosphoserine). The bZIP domain occupies 429–492 (ERKRKEFLER…PSSSSNSQFN (64 aa)). Residues 430-451 (RKRKEFLERNRVAASKFRKRKK) are basic motif. Residues 454–461 (IKKIENDL) form a leucine-zipper region. Phosphoserine is present on serine 558.

The protein belongs to the bZIP family.

It is found in the nucleus. Its function is as follows. Binds to the CRE motif 5'-TGACGTCA-3' and acts as a repressor of transcription of the SUC2 gene and most probably other genes. The sequence is that of CRE-binding bZIP protein SKO1 (SKO1) from Saccharomyces cerevisiae (strain ATCC 204508 / S288c) (Baker's yeast).